The chain runs to 164 residues: Dehydrin Rab16C (164 aa).

Positions 42 to 51 (MGGHHAGAGG) are enriched in gly residues. The disordered stretch occupies residues 42–164 (MGGHHAGAGG…KIKEKLPGQH (123 aa)). Residues 105–115 (GNNQQQQQMMG) show a composition bias toward low complexity. The span at 128-138 (GMTGAGTGTGV) shows a compositional bias: gly residues. Basic and acidic residues predominate over residues 147 to 164 (GEKKGFMDKIKEKLPGQH).

The protein belongs to the plant dehydrin family.

The polypeptide is Dehydrin Rab16C (RAB16C) (Oryza sativa subsp. japonica (Rice)).